Reading from the N-terminus, the 74-residue chain is ATP synthase subunit 9, mitochondrial (74 aa).

2 helical membrane passes run 16–36 (GLIG…IGVS) and 50–70 (ILGF…AFLL).

This sequence belongs to the ATPase C chain family. F-type ATPases have 2 components, CF(1) - the catalytic core - and CF(0) - the membrane proton channel. CF(1) has five subunits: alpha(3), beta(3), gamma(1), delta(1), epsilon(1). CF(0) has three main subunits: a, b and c.

Its subcellular location is the mitochondrion inner membrane. In terms of biological role, mitochondrial membrane ATP synthase (F(1)F(0) ATP synthase or Complex V) produces ATP from ADP in the presence of a proton gradient across the membrane which is generated by electron transport complexes of the respiratory chain. F-type ATPases consist of two structural domains, F(1) - containing the extramembraneous catalytic core and F(0) - containing the membrane proton channel, linked together by a central stalk and a peripheral stalk. During catalysis, ATP synthesis in the catalytic domain of F(1) is coupled via a rotary mechanism of the central stalk subunits to proton translocation. Part of the complex F(0) domain. A homomeric c-ring of probably 10 subunits is part of the complex rotary element. The polypeptide is ATP synthase subunit 9, mitochondrial (atp-9) (Neurospora crassa (strain ATCC 24698 / 74-OR23-1A / CBS 708.71 / DSM 1257 / FGSC 987)).